Consider the following 108-residue polypeptide: Movement protein TGB2 (108 aa).

Topologically, residues 1-8 (MPLTPPPD) are cytoplasmic. Residues 9–29 (YTKPFIAVVVGGTLAAFVLLL) form a helical membrane-spanning segment. The Lumenal segment spans residues 30–71 (TRNTLPHTGDNLHSLPHGGTYCDGTKRIRYGGPHRSHVPELP). A helical transmembrane segment spans residues 72–92 (AKSWALITVVAILIALHFSCL). Residues 93–108 (RTHRVHRCVLCHTTSG) lie on the Cytoplasmic side of the membrane.

The protein belongs to the Tymovirales TGBp2 protein family.

The protein resides in the host endoplasmic reticulum membrane. Functionally, plays a role in viral cell-to-cell propagation, by facilitating genome transport to neighboring plant cells through plasmosdesmata,. The chain is Movement protein TGB2 from Lily virus X.